Reading from the N-terminus, the 282-residue chain is ABC transporter I family member 21 (282 aa).

Positions 13–248 constitute an ABC transporter domain; that stretch reads IRVSGMQFSY…KTSPNLLSVV (236 aa). An ATP-binding site is contributed by 46 to 53; sequence GANGSGKT.

The protein belongs to the ABC transporter superfamily. ABCI family. Expressed in root elongating zone and root meristem, as well as in elongating etiolated hypocotyls.

The protein resides in the cytoplasm. The sequence is that of ABC transporter I family member 21 (ABCI21) from Arabidopsis thaliana (Mouse-ear cress).